The chain runs to 206 residues: dITP/XTP pyrophosphatase (206 aa).

7–12 (SSHGYK) serves as a coordination point for substrate. Asp70 (proton acceptor) is an active-site residue. Asp70 contributes to the Mg(2+) binding site. Substrate-binding positions include Thr71, 154-157 (FGYD), Lys177, and 182-183 (HR).

It belongs to the HAM1 NTPase family. In terms of assembly, homodimer. It depends on Mg(2+) as a cofactor.

The catalysed reaction is XTP + H2O = XMP + diphosphate + H(+). It carries out the reaction dITP + H2O = dIMP + diphosphate + H(+). It catalyses the reaction ITP + H2O = IMP + diphosphate + H(+). Pyrophosphatase that catalyzes the hydrolysis of nucleoside triphosphates to their monophosphate derivatives, with a high preference for the non-canonical purine nucleotides XTP (xanthosine triphosphate), dITP (deoxyinosine triphosphate) and ITP. Seems to function as a house-cleaning enzyme that removes non-canonical purine nucleotides from the nucleotide pool, thus preventing their incorporation into DNA/RNA and avoiding chromosomal lesions. This Chlamydia pneumoniae (Chlamydophila pneumoniae) protein is dITP/XTP pyrophosphatase.